The following is a 393-amino-acid chain: Myb-related transcription factor, partner of profilin (393 aa).

Positions 1–11 are enriched in low complexity; it reads MASATAAAAPG. Residues 1 to 21 are disordered; it reads MASATAAAAPGEAEETTRLRK. Positions 16–88 constitute a Myb-like domain; it reads TTRLRKPRFS…EVQKRWNDFK (73 aa). The Nuclear localization signal signature appears at 87-90; it reads FKRR. Disordered regions lie at residues 125–254, 290–323, and 348–393; these read GPGV…EQSL, PLLPGTPADPLPPPPPPPPPPPPKPVLPPSAPKV, and IISP…WKSP. The span at 142–157 shows a compositional bias: low complexity; that stretch reads AAASSQPQASTASTQR. Positions 160-171 are enriched in basic and acidic residues; it reads LSEDRRQDRRAD. Positions 173 to 184 are enriched in polar residues; it reads PAQSKGGSSSPE. Composition is skewed to pro residues over residues 219 to 229, 238 to 247, 296 to 320, and 359 to 368; these read PPLPAPPPPPT, SPSPTPPRPT, PADPLPPPPPPPPPPPPKPVLPPSA, and KPLPPAPPLP. A compositionally biased stretch (basic residues) spans 375–393; sequence HKRRKGFPTRKRRGRWKSP. Short sequence motifs (nuclear localization signal) lie at residues 376-379 and 384-387; these read KRRK and RKRR.

As to quaternary structure, interacts with PFN1. Homodimer and heterodimer with PFN1. Ubiquitous. Highly expressed in brain, liver and testis. Moderate expression in heart, lung and skeletal muscle. Low expression in spleen and kidney.

It is found in the nucleus. Transcriptional repressor; DNA-binding protein that specifically recognizes the core sequence 5'-YAAC[GT]G-3'. Dimerization with PFN1 reduces its DNA-binding capacity. In Mus musculus (Mouse), this protein is Myb-related transcription factor, partner of profilin (Mypop).